The following is a 95-amino-acid chain: Large ribosomal subunit protein uL23 (95 aa).

The protein belongs to the universal ribosomal protein uL23 family. Part of the 50S ribosomal subunit. Contacts protein L29, and trigger factor when it is bound to the ribosome.

In terms of biological role, one of the early assembly proteins it binds 23S rRNA. One of the proteins that surrounds the polypeptide exit tunnel on the outside of the ribosome. Forms the main docking site for trigger factor binding to the ribosome. The protein is Large ribosomal subunit protein uL23 of Anoxybacillus flavithermus (strain DSM 21510 / WK1).